The sequence spans 156 residues: Transcription elongation factor GreA (156 aa).

Residues 6–75 (IYLTKEGYEK…ELENMLSKAE (70 aa)) adopt a coiled-coil conformation.

Belongs to the GreA/GreB family.

Functionally, necessary for efficient RNA polymerase transcription elongation past template-encoded arresting sites. The arresting sites in DNA have the property of trapping a certain fraction of elongating RNA polymerases that pass through, resulting in locked ternary complexes. Cleavage of the nascent transcript by cleavage factors such as GreA or GreB allows the resumption of elongation from the new 3'terminus. GreA releases sequences of 2 to 3 nucleotides. The sequence is that of Transcription elongation factor GreA from Thermosipho africanus (strain TCF52B).